A 332-amino-acid polypeptide reads, in one-letter code: uncharacterized protein (332 aa).

The N-terminal stretch at 1–23 (MKRIPSLIIGLLLILATWHSVLA) is a signal peptide. A helical transmembrane segment spans residues 231-251 (SFFLGMIVTLIILAPVILYLW).

Its subcellular location is the membrane. This is an uncharacterized protein from Pyrococcus horikoshii (strain ATCC 700860 / DSM 12428 / JCM 9974 / NBRC 100139 / OT-3).